A 658-amino-acid polypeptide reads, in one-letter code: MAELQTGKPTPLGASFDGQGVNFALFSADAERVELCIFDERQQEQRLELTARSGDIWHGYLPAAQPGLRYGFRVDGPFEPSQGLRFNPHKLLLDPCARQLDGWVVDDDCLQGGIDQRDERDSADIMAKCVVTAEDYDWQDDQHPHTLWHQTVIYEAHVRGLTQLHPDIPEDIRGSYAALGHPVMIDYLTSLGVTALELLPVQQHADEPRLQQLGLRNYWGYNVLLPFAVDNSLAAGDDALNEFRDAVKALHRAGIEVILDVVFNHSAELDVEGPTLCQRGIDNRSYYWLGENGEYHNWTGCGNVLRLNHPAVIDWVMDCLRFWREVCHVDGFRFDLATVLGRTPDFTAAAPLLSAMKNDSRLQGCKLIAEPWDIGHGGYQLGQFPTPFAEWSDRYRDDMRRFWLHGDISLGAFARRFAASSDIFQQHDRLPFASINKLTAHDGFTLRDLVSFNHKHNDANGEGNRDGTDSNFSNNHGTEGLEADDDILQRRLASQKALLTTLILSQGTPMLLAGDELGHSQQGNNNAYCQDNELTWLHWENANSALREFVAGLIQLRRTIPALQQETWWQEGDGAVQWLNREGQPLTPQQWEQGEHQLQILLSGRWLVLFNASLHAGEFMLPEGHWQVSPPFDETNPPEGGIWHGQAQAVCVLIKQTA.

Residue D335 is the Nucleophile of the active site. The active-site Proton donor is the E370. Residues 457–468 (NDANGEGNRDGT) show a composition bias toward basic and acidic residues. The segment at 457–478 (NDANGEGNRDGTDSNFSNNHGT) is disordered.

This sequence belongs to the glycosyl hydrolase 13 family.

It carries out the reaction Hydrolysis of (1-&gt;6)-alpha-D-glucosidic linkages to branches with degrees of polymerization of three or four glucose residues in limit dextrin.. Its pathway is glycan degradation; glycogen degradation. Functionally, removes maltotriose and maltotetraose chains that are attached by 1,6-alpha-linkage to the limit dextrin main chain, generating a debranched limit dextrin. The chain is Glycogen debranching enzyme from Pectobacterium carotovorum subsp. carotovorum (strain PC1).